A 541-amino-acid polypeptide reads, in one-letter code: 5' exonuclease Apollo (541 aa).

A Glycyl lysine isopeptide (Lys-Gly) (interchain with G-Cter in SUMO2) cross-link involves residue Lys-334. The disordered stretch occupies residues 455–475 (PLLSRGDSGSPARGNQSDCVG). A TBM motif is present at residues 492–507 (ESRGLALKYLLTPVHF).

The protein belongs to the DNA repair metallo-beta-lactamase (DRMBL) family. As to quaternary structure, interacts with MUS81, MRE11 and FANCD2. Interacts with HSPA2, HSPA8 and HSPA14. Interacts with SPAG5. Interacts with TERF2; the interaction is direct. Ubiquitinated, leading to its degradation. Interaction with TERF2 protects it from ubiquitination.

It localises to the chromosome. It is found in the telomere. Its subcellular location is the nucleus. The protein localises to the cytoplasm. The protein resides in the cytoskeleton. It localises to the microtubule organizing center. It is found in the centrosome. It carries out the reaction a beta-lactam + H2O = a substituted beta-amino acid. Its function is as follows. 5'-3' exonuclease that plays a central role in telomere maintenance and protection during S-phase. Participates in the protection of telomeres against non-homologous end-joining (NHEJ)-mediated repair, thereby ensuring that telomeres do not fuse. Plays a key role in telomeric loop (T loop) formation by being recruited by TERF2 at the leading end telomeres and by processing leading-end telomeres immediately after their replication via its exonuclease activity: generates 3' single-stranded overhang at the leading end telomeres avoiding blunt leading-end telomeres that are vulnerable to end-joining reactions and expose the telomere end in a manner that activates the DNA repair pathways. Together with TERF2, required to protect telomeres from replicative damage during replication by controlling the amount of DNA topoisomerase (TOP1, TOP2A and TOP2B) needed for telomere replication during fork passage and prevent aberrant telomere topology. Also involved in response to DNA damage: plays a role in response to DNA interstrand cross-links (ICLs) by facilitating double-strand break formation. In case of spindle stress, involved in prophase checkpoint. Possesses beta-lactamase activity, catalyzing the hydrolysis of penicillin G and nitrocefin. Exhibits no activity towards other beta-lactam antibiotic classes including cephalosporins (cefotaxime) and carbapenems (imipenem). The protein is 5' exonuclease Apollo (Dclre1b) of Mus musculus (Mouse).